A 239-amino-acid chain; its full sequence is Calcium-activated potassium channel subunit beta-3 (239 aa).

The Cytoplasmic segment spans residues 1 to 51 (MQPFSIPVQITLQGGRRRQGRTALPASGISNGDPLKVHPKLPSSAGEDRAT). The segment at 15–38 (GRRRQGRTALPASGISNGDPLKVH) is disordered. Residues 52–72 (LLGIAMMASSVLMFFLLGTTV) traverse the membrane as a helical segment. At 73–197 (LKPFMLSSPR…GVVLRKSGHK (125 aa)) the chain is on the extracellular side. Asn-86, Asn-123, and Asn-174 each carry an N-linked (GlcNAc...) asparagine glycan. A helical membrane pass occupies residues 198–218 (VVFHCLFWPLLTLLGGALIVG). Residues 219-239 (LVRLTQHLSFQCEKYRAVVRA) are Cytoplasmic-facing.

Belongs to the KCNMB (TC 8.A.14.1) family. KCNMB3 subfamily. As to quaternary structure, interacts with KCNMA1 tetramer. There are probably 4 molecules of KCMNB3 per KCNMA1 tetramer. Post-translationally, N-glycosylated. In terms of processing, the extracellular domain contains disulfide bond essential for the gating mechanism.

It localises to the membrane. Regulatory subunit of the calcium activated potassium KCNMA1 (maxiK) channel. Modulates the calcium sensitivity and gating kinetics of KCNMA1, thereby contributing to KCNMA1 channel diversity. Alters the functional properties of the current expressed by the KCNMA1 channel. May partially inactivate the current of KCNBMA. Two or more subunits of KCNMB3 are required to block the KCNMA1 tetramer. The chain is Calcium-activated potassium channel subunit beta-3 from Rattus norvegicus (Rat).